Here is a 135-residue protein sequence, read N- to C-terminus: UPF0738 protein Aflv_2116 (135 aa).

Belongs to the UPF0738 family.

The protein is UPF0738 protein Aflv_2116 of Anoxybacillus flavithermus (strain DSM 21510 / WK1).